The primary structure comprises 363 residues: UDP-N-acetylglucosamine--N-acetylmuramyl-(pentapeptide) pyrophosphoryl-undecaprenol N-acetylglucosamine transferase (363 aa).

UDP-N-acetyl-alpha-D-glucosamine-binding positions include 10–12 (TGG), Asn-124, Ser-195, Ile-248, and Gln-293.

It belongs to the glycosyltransferase 28 family. MurG subfamily.

It is found in the cell membrane. It carries out the reaction Mur2Ac(oyl-L-Ala-gamma-D-Glu-L-Lys-D-Ala-D-Ala)-di-trans,octa-cis-undecaprenyl diphosphate + UDP-N-acetyl-alpha-D-glucosamine = beta-D-GlcNAc-(1-&gt;4)-Mur2Ac(oyl-L-Ala-gamma-D-Glu-L-Lys-D-Ala-D-Ala)-di-trans,octa-cis-undecaprenyl diphosphate + UDP + H(+). It functions in the pathway cell wall biogenesis; peptidoglycan biosynthesis. Its function is as follows. Cell wall formation. Catalyzes the transfer of a GlcNAc subunit on undecaprenyl-pyrophosphoryl-MurNAc-pentapeptide (lipid intermediate I) to form undecaprenyl-pyrophosphoryl-MurNAc-(pentapeptide)GlcNAc (lipid intermediate II). In Lacticaseibacillus casei (strain BL23) (Lactobacillus casei), this protein is UDP-N-acetylglucosamine--N-acetylmuramyl-(pentapeptide) pyrophosphoryl-undecaprenol N-acetylglucosamine transferase.